The chain runs to 390 residues: Centrosomal protein of 44 kDa (390 aa).

A binds with microtubules and centrioles region spans residues 11 to 195 (RNLEQVLRLL…ISEDTLSPIT (185 aa)). Residues 233 to 269 (EITALQTMLAECQENLKKLTSIEKRLDCLEQKMKGKV) are a coiled coil. Positions 322–348 (RKSEVERPASIPLSSGYSTASSDSTPR) are disordered. Phosphoserine occurs at positions 331 and 345. A compositionally biased stretch (low complexity) spans 335 to 345 (SSGYSTASSDS). The residue at position 346 (Thr-346) is a Phosphothreonine. Residues 361–385 (SEETTIQKMERMKKMFEETAELLKC) adopt a coiled-coil conformation.

As to quaternary structure, interacts with CROCC. Interacts with POC1B; the interaction is direct and recruits POC1B to centriolar microtubules. Binds to centriolar microtubules.

It is found in the cytoplasm. The protein localises to the cytoskeleton. The protein resides in the microtubule organizing center. Its subcellular location is the centrosome. It localises to the centriole. It is found in the spindle pole. The protein localises to the midbody. In terms of biological role, centriole-enriched microtubule-binding protein involved in centriole biogenesis. In collaboration with CEP295 and POC1B, is required for the centriole-to-centrosome conversion by ensuring the formation of bona fide centriole wall. Functions as a linker component that maintains centrosome cohesion. Associates with CROCC and regulates its stability and localization to the centrosome. This is Centrosomal protein of 44 kDa (CEP44) from Homo sapiens (Human).